The chain runs to 214 residues: Adenylate kinase (214 aa).

Residue 10 to 15 (GAGKGT) coordinates ATP. The NMP stretch occupies residues 30 to 59 (STGDMLRAAVKAGSELGKQAKAIMDAGKLV). AMP-binding positions include Thr-31, Arg-36, 57–59 (KLV), 85–88 (GFPR), and Gln-92. The tract at residues 122 to 159 (GRRVHPGSGRVYHVKFNPPQVEGKDDVTGEDLMTRKDD) is LID. Residues Arg-123 and 132–133 (VY) contribute to the ATP site. Residues Arg-156 and Arg-167 each contribute to the AMP site. Gln-200 contacts ATP.

This sequence belongs to the adenylate kinase family. In terms of assembly, monomer.

The protein localises to the cytoplasm. It carries out the reaction AMP + ATP = 2 ADP. Its pathway is purine metabolism; AMP biosynthesis via salvage pathway; AMP from ADP: step 1/1. In terms of biological role, catalyzes the reversible transfer of the terminal phosphate group between ATP and AMP. Plays an important role in cellular energy homeostasis and in adenine nucleotide metabolism. The chain is Adenylate kinase from Edwardsiella ictaluri (strain 93-146).